The sequence spans 346 residues: GTPase Obg (346 aa).

Residues 1-158 (MKFLDQVKIY…RAIWLRLKLI (158 aa)) form the Obg domain. One can recognise an OBG-type G domain in the interval 159–327 (ADVGLVGLPN…LLREAFALVR (169 aa)). Residues 165–172 (GLPNAGKS), 190–194 (FTTLA), 212–215 (DIPG), 279–282 (NKID), and 308–310 (SGF) each bind GTP. Positions 172 and 192 each coordinate Mg(2+).

It belongs to the TRAFAC class OBG-HflX-like GTPase superfamily. OBG GTPase family. Monomer. It depends on Mg(2+) as a cofactor.

It is found in the cytoplasm. In terms of biological role, an essential GTPase which binds GTP, GDP and possibly (p)ppGpp with moderate affinity, with high nucleotide exchange rates and a fairly low GTP hydrolysis rate. Plays a role in control of the cell cycle, stress response, ribosome biogenesis and in those bacteria that undergo differentiation, in morphogenesis control. This chain is GTPase Obg, found in Phenylobacterium zucineum (strain HLK1).